A 174-amino-acid chain; its full sequence is UPF0398 protein LACR_0544 (174 aa).

The protein belongs to the UPF0398 family.

In Lactococcus lactis subsp. cremoris (strain SK11), this protein is UPF0398 protein LACR_0544.